Reading from the N-terminus, the 312-residue chain is MKFFCAFIFTALIFISLEKIGQSCCPNPIVDSEQLTIFQAVILGMVQGVTECIPVSSTAHLKIIPVALGWGDPGVAFTAVIQLGSIVSIVWYFWNDLTKITFGAYKSIITSDYQSPDLKMLVSIGLGTIPIVFFGLLIKVFIPDFDNSRLRSTVAIAIASIIMALLLVIAERIGSRKRNFEKLDIRDGIVIGLAQVLALIPGVSRSGSTITGGLFIGLERSTAARFSFLLGLPAITLAGLVELKTLLDEGFGSVGLVATLTGVFSAIIFSYIAISWLMRYLQTQDTWIFIWYRLAFGILILIGIISGVIENT.

7 helical membrane-spanning segments follow: residues 74–94 (GVAFTAVIQLGSIVSIVWYFW), 122–142 (VSIGLGTIPIVFFGLLIKVFI), 154–174 (VAIAIASIIMALLLVIAERIG), 183–203 (LDIRDGIVIGLAQVLALIPGV), 226–246 (FSFLLGLPAITLAGLVELKTL), 254–274 (VGLVATLTGVFSAIIFSYIAI), and 288–308 (IFIWYRLAFGILILIGIISGV).

This sequence belongs to the UppP family.

Its subcellular location is the cell inner membrane. The enzyme catalyses di-trans,octa-cis-undecaprenyl diphosphate + H2O = di-trans,octa-cis-undecaprenyl phosphate + phosphate + H(+). Its function is as follows. Catalyzes the dephosphorylation of undecaprenyl diphosphate (UPP). Confers resistance to bacitracin. The polypeptide is Undecaprenyl-diphosphatase (Trichodesmium erythraeum (strain IMS101)).